We begin with the raw amino-acid sequence, 358 residues long: Protein-glutamate methylesterase/protein-glutamine glutaminase 1 (358 aa).

Residues 8 to 125 enclose the Response regulatory domain; that stretch reads RVLIVDDSAV…ARGLEGYAEE (118 aa). Aspartate 59 carries the post-translational modification 4-aspartylphosphate. The CheB-type methylesterase domain occupies 157–352; that stretch reads PVPGSALRFR…LERVAERLIA (196 aa). Active-site residues include serine 177, histidine 203, and aspartate 299.

This sequence belongs to the CheB family. Phosphorylated by CheA. Phosphorylation of the N-terminal regulatory domain activates the methylesterase activity.

It localises to the cytoplasm. The catalysed reaction is [protein]-L-glutamate 5-O-methyl ester + H2O = L-glutamyl-[protein] + methanol + H(+). The enzyme catalyses L-glutaminyl-[protein] + H2O = L-glutamyl-[protein] + NH4(+). Functionally, involved in chemotaxis. Part of a chemotaxis signal transduction system that modulates chemotaxis in response to various stimuli. Catalyzes the demethylation of specific methylglutamate residues introduced into the chemoreceptors (methyl-accepting chemotaxis proteins or MCP) by CheR. Also mediates the irreversible deamidation of specific glutamine residues to glutamic acid. This is Protein-glutamate methylesterase/protein-glutamine glutaminase 1 from Xanthomonas campestris pv. campestris (strain ATCC 33913 / DSM 3586 / NCPPB 528 / LMG 568 / P 25).